We begin with the raw amino-acid sequence, 243 residues long: 1-(5-phosphoribosyl)-5-[(5-phosphoribosylamino)methylideneamino] imidazole-4-carboxamide isomerase (243 aa).

Aspartate 8 functions as the Proton acceptor in the catalytic mechanism. The active-site Proton donor is aspartate 129.

It belongs to the HisA/HisF family.

The protein resides in the cytoplasm. It catalyses the reaction 1-(5-phospho-beta-D-ribosyl)-5-[(5-phospho-beta-D-ribosylamino)methylideneamino]imidazole-4-carboxamide = 5-[(5-phospho-1-deoxy-D-ribulos-1-ylimino)methylamino]-1-(5-phospho-beta-D-ribosyl)imidazole-4-carboxamide. It participates in amino-acid biosynthesis; L-histidine biosynthesis; L-histidine from 5-phospho-alpha-D-ribose 1-diphosphate: step 4/9. The chain is 1-(5-phosphoribosyl)-5-[(5-phosphoribosylamino)methylideneamino] imidazole-4-carboxamide isomerase from Citrifermentans bemidjiense (strain ATCC BAA-1014 / DSM 16622 / JCM 12645 / Bem) (Geobacter bemidjiensis).